Reading from the N-terminus, the 961-residue chain is Integrator complex subunit 7 (961 aa).

A compositionally biased stretch (low complexity) spans 937–955 (QVRLQQQQGQPPSQQQQQR). The interval 937–961 (QVRLQQQQGQPPSQQQQQRTAYSRF) is disordered.

It belongs to the Integrator subunit 7 family. In terms of assembly, component of the Integrator complex, composed of core subunits INTS1, INTS2, INTS3, INTS4, INTS5, INTS6, INTS7, INTS8, INTS9/RC74, INTS10, INTS11/CPSF3L, INTS12, INTS13, INTS14 and INTS15. The core complex associates with protein phosphatase 2A subunits PPP2CA and PPP2R1A, to form the Integrator-PP2A (INTAC) complex.

Its subcellular location is the nucleus. The protein localises to the chromosome. The protein resides in the cytoplasm. Its function is as follows. Component of the integrator complex, a multiprotein complex that terminates RNA polymerase II (Pol II) transcription in the promoter-proximal region of genes. The integrator complex provides a quality checkpoint during transcription elongation by driving premature transcription termination of transcripts that are unfavorably configured for transcriptional elongation: the complex terminates transcription by (1) catalyzing dephosphorylation of the C-terminal domain (CTD) of Pol II subunit POLR2A/RPB1 and SUPT5H/SPT5, (2) degrading the exiting nascent RNA transcript via endonuclease activity and (3) promoting the release of Pol II from bound DNA. The integrator complex is also involved in terminating the synthesis of non-coding Pol II transcripts, such as enhancer RNAs (eRNAs), small nuclear RNAs (snRNAs), telomerase RNAs and long non-coding RNAs (lncRNAs). In Gallus gallus (Chicken), this protein is Integrator complex subunit 7 (INTS7).